An 88-amino-acid chain; its full sequence is Protein LE25 (88 aa).

Residues 1–88 (MQTGKDAASA…YGATGNHTTF (88 aa)) are disordered. The segment covering 14–65 (GMEKTKANVQEKAERMTTRDPLKKEMATEKKEDRVAAAEMGKRDAKAQHAAE) has biased composition (basic and acidic residues).

It belongs to the LEA type 1 family. Accumulates in developing seeds and drought-stressed leaves.

The polypeptide is Protein LE25 (LE25) (Solanum lycopersicum (Tomato)).